We begin with the raw amino-acid sequence, 430 residues long: Serine--tRNA ligase (430 aa).

L-serine is bound at residue 237–239 (TAE). Position 268-270 (268-270 (RSE)) interacts with ATP. Glu-291 is an L-serine binding site. 355–358 (EISS) is an ATP binding site. Ser-391 is an L-serine binding site.

This sequence belongs to the class-II aminoacyl-tRNA synthetase family. Type-1 seryl-tRNA synthetase subfamily. In terms of assembly, homodimer. The tRNA molecule binds across the dimer.

The protein resides in the cytoplasm. It catalyses the reaction tRNA(Ser) + L-serine + ATP = L-seryl-tRNA(Ser) + AMP + diphosphate + H(+). It carries out the reaction tRNA(Sec) + L-serine + ATP = L-seryl-tRNA(Sec) + AMP + diphosphate + H(+). The protein operates within aminoacyl-tRNA biosynthesis; selenocysteinyl-tRNA(Sec) biosynthesis; L-seryl-tRNA(Sec) from L-serine and tRNA(Sec): step 1/1. Its function is as follows. Catalyzes the attachment of serine to tRNA(Ser). Is also able to aminoacylate tRNA(Sec) with serine, to form the misacylated tRNA L-seryl-tRNA(Sec), which will be further converted into selenocysteinyl-tRNA(Sec). The chain is Serine--tRNA ligase from Klebsiella pneumoniae subsp. pneumoniae (strain ATCC 700721 / MGH 78578).